We begin with the raw amino-acid sequence, 486 residues long: UDP-GalNAc:beta-1,3-N-acetylgalactosaminyltransferase 2 (486 aa).

Topologically, residues 1 to 10 (MRHLLFLCPC) are cytoplasmic. Residues 11–31 (VIGVAFHLWLFNFSGLFSWFL) form a helical; Signal-anchor for type II membrane protein membrane-spanning segment. The Lumenal segment spans residues 32–486 (VWSPHSYDIV…CGNPCACEDR (455 aa)). Residues N103 and N160 are each glycosylated (N-linked (GlcNAc...) asparagine).

The protein belongs to the glycosyltransferase 31 family.

It is found in the golgi apparatus membrane. The protein localises to the endoplasmic reticulum. The enzyme catalyses 3-O-(N-acetyl-beta-D-glucosaminyl-(1-&gt;4)-alpha-D-mannosyl)-L-threonyl-[protein] + UDP-N-acetyl-alpha-D-galactosamine = 3-O-[beta-D-GalNAc-(1-&gt;3)-beta-D-GlcNAc-(1-&gt;4)-alpha-D-Man]-L-Thr-[protein] + UDP + H(+). It participates in protein modification; protein glycosylation. Functionally, beta-1,3-N-acetylgalactosaminyltransferase that synthesizes a unique carbohydrate structure, GalNAc-beta-1-3GlcNAc, on N- and O-glycans. Has no galactose nor galactosaminyl transferase activity toward any acceptor substrate. Involved in alpha-dystroglycan (dag1) glycosylation. In Xenopus laevis (African clawed frog), this protein is UDP-GalNAc:beta-1,3-N-acetylgalactosaminyltransferase 2 (b3galnt2).